Consider the following 3164-residue polypeptide: MYKEAERPIEVWRTQVMDGPTWTALSEPCRNRLFFASGKGGEHLTLDVIQPDSYTKIRLFRSGRFEVSVDGKSFGQGGNRYRFVFRYDSLLSTPFGYPAEDKEMALQGYNHEQLLGEMFLKLPDSYVDGRPIAEAFFRYVDDLKWDVGVFRDRRSLTELHLPASSGLTTEQARVAKLEWPPLPIIQAQPTILAGIIDNFKICFPVNGKWVYGQGLSWTRYDGDASVPISLLTNRQHARFWNDKDVPTGLKLSKEGFIKLWAQKSRKWQDHMARAIGLSHAATAELVRATKVNEAKPHLVPMEEAKEAPRQQLVPRRSTFVDSHEKGVEVDPLRLPTEEGRCFELLFNNQVTPAIFDKKPLLRDVLAVFKENVCTMDSLEISHSDRCVHIVTGETFRNYKEIKAVLEVIIWNDPNILVGAEEGSIADYVKAGKHFLFENHQWVRNGLKLAKGLAEPGQLAKDNTNPSTPKPIETTDYIHPFDNGQPLPGRSDQWVSGFEVTRLRHHEEMPHIRNVRNTGIHGLPGDFLSNYPRLPTPVFHRLRDLWYDVIGILMKLEFGDNRSPVLNVTANADWVRSETTVNFISDQPGKARSRPRKDGGFDILVPCRGIATRSIRLLPLFIRLPPRFKAVALLNGRQSDYDNYGWPVFNPVIPLPQIDSFYVEAVAAGRSMYPPGFLLDRYDALGFLIHTATVYGAEEAFLLPFTHHARVYPPPRPGREIAFGSWCKNYKFTAERYWYDADWKLRVHETNHDFDRLIEITKTCRRNPPEENLQARLKDTAREVCSIWQYNIMIASSVAFLIPLFYTLYVPYLQFYLHVDPGDYMLLPPVLWLVWTNLCYGYACDAWCRLFFFVEEAGKKELVHSSEEFSSDPSSTLLIPTMGTRGDHVPPRFFANMAVLAGVKTHLLKLQTATYGDLENLKKGKLGSLLPGYLQNHYSVLRGYKAVFTPHVELDMPNATSYNLAPPRSYINKIRYLTDENRSGASIVDRAVTWFAEELADTFWPDWQIGCLRGCNLPRSADGVSLITKRPNLKTGKIGWLHGSADPAVVPKDIRDRYPLVPNGDHNEIFRHYDKIYMPGGAGAVQTAIACGCEVVVTDVNLDRDYHTMPTQKDFHQPSILPYFAWLWRQGFDVKLPRVLLVVGWLKFHYSIRYKHLEFAADFVIRAGLFWWYGCLHLLPFMAAAIMTPRFVKKYLVSMAWLTEPGLLMLKALWRFPIFMVTPRWMLPFIVTVSAYNWWWPLSQDGLNYASKRFELIFEPVARGKYTFSYPFGHWCLRDTNSMIIYEGKFVDSSETSIGSPFKLSKSVRPVRPGAVFHLVPFHIQKLLDSMDEEPLPYSANHNCTTVILKGIMYRSALGFVFAYAVSWAVYLVLRPPQAAATVYHWMYPERSWDTSRLYHLLGFAAGGTVPMEVIDEEPIEEKPSDAGRSEPIPDNDKQEESDYDQEWWGSQDSIDTVSNDLCYLLSFLKDTAIPEEVKLDVIELAYTQFVRNEKGRIPEPKETRILVMPNWKPDNWARLIDETHRVLSQFTHYTPRVLNELVVWLKGLGENLYRVAEPILMLLVRAMRAAKSVSDRATRSIYHCLCHWLDVMYGGSAPTRVKTVWGLTGLIASGMTSQKAILAQNIAMMEYQGRGNFLDDYDNFVSNIKEPGKGLPGINTIGGPQRRPIRYKNPVMSHQAAEICGLKPGEYEVDEKYQERINDYLAEGIPQAVDGVLFGDRNPDRIARSINRYEPEYSGCSPEDKALVEDTARAMFEQWPEVFADRDIMLPKGVELYIKEKYSAGTPFISSFYKSRKALKQAGVMDVIRKNALECIKTGKYPTQFYHAFAKSQAVPGQPLLAPRMKDLRTVVSEDLSAYMVDQIFQIEANKRITWETYGAGSGMPLSQSMARIWDELHDLRKREGGQFIIADATAYDSNCKPVLFHGAGKLVELGFQNHPSGKGRQFAQVVQCKFEAMQNAWVMGITEPSYSALTFHVPDAEVRRDLESKFPRHFVTFSELLEHNNMNVTEWKRLTWEEQKACARDMQSVPGKVFLTNDPALRLQGSSWQGSFTTEPKRDEFRKYQTYFCNSKEAMKEDIKRIVFANREVISNVHHKNRGGGTGQSATSWDNTATFKLGVISAWARATGKLPKDFFCSNRLYNTSDDTVWWSKDLLSSAEVDRFKQAAADFGILLEIGSTKKITEVEYLSKLPRRPTAEDSADYRTWRQGRIENMRSSGRFTEEQMLSIEREQLPQFLMVQNPTAILMRRTAFRYYQSSPSKFLYTSCERGAGHALVTAFQPALYKRFAIEYAEDLNRLCKEHHINQRYELVSQQDRIKMQVINVNPNWKQGFRLSPRQEAFLRWIRQAKFPSYRQVLDIHLRTKDPDPSAHDRFIAKLDRAWRNPDEGIRDMVDGVYRYTDLIPEEFKRFMPSTDMLYAENPWHTHNQYVEKFIYLKLLETTTVDELTFAQFDAVAKESPYGICMNTIKFWEDLRDPDYLKDLLASEAMIDKVRIYQGMTVIISAMYFAMHWVELFVQSLFLIGPLYNLFMWSFWGLSKVYGLANTFYWHGKARSSREISSIMPRDPYMWSKRFVSTMADFIPERFALGLVPATLILDGLAEIIEVLFGRMWRMFANLKSVGTDFGDARSGKSLNVPSNPWAAYAHTYATKAIEHGHVTVAAKTASGKSTFFPAAVWAERRNIGVKKLWIVMPRKILRDNWEIPFDIRSQIVKRGKTLDPTADIYITTYGHFRTRIGGLVPRDNLVFFDEFHEMDGFMLQDVEEWKGPTIFMSATPVALHGMADIPFLEPTLPKRFNLTVYKVDSDDVLEMWNRARNQFADQPALLARPMIIVPTYNELKKTIAGLENLDRSVTWHEVSSNSPFVPKTGGLVCTPYVQTGIDIKPAPSILIDSGRDVVVHKGRLITPHPYTDEKTNEQRVNRVGRTMDGVVIQPQLAGTGDPPVKYPSGIFFSSRLVAGQYRVPRLTEVDGCVHPELPYISIKYTSELSNPVEAKKEEQNVRKSLLFIHLMALAGVRQSEWALRYNRYFELHLPFGEDEDHLQRILEQGKLRYAHHIPVDMAMQLLGNGHVTWGIGGVPTITRPRYPCDGMWVEDPSSRKSYVHKVLLHQREHAEIGMWQAQVNELKAQKLALQSQLRSVCTRRSTASRILRHIRPPDIPVCG.

Residues 271–418 (MARAIGLSHA…IWNDPNILVG (148 aa)) enclose the Peptidase C8 domain. Catalysis depends on for papain-like protease p48 activity residues cysteine 341 and histidine 388. 6 consecutive transmembrane segments (helical) span residues 684-704 (LGFL…LLPF), 791-811 (IMIA…YVPY), 823-843 (YMLL…GYAC), 1166-1186 (AGLF…AAIM), 1215-1235 (FPIF…VSAY), and 1356-1376 (ALGF…LRPP). Residues 1419–1445 (IEEKPSDAGRSEPIPDNDKQEESDYDQ) form a disordered region. Positions 1792–2207 (FYKSRKALKQ…AEDSADYRTW (416 aa)) are RNA-directed RNA polymerase. The next 3 membrane-spanning stretches (helical) occupy residues 2494–2514 (VRIY…MHWV), 2516–2536 (LFVQ…WSFW), and 2589–2609 (LGLV…EVLF). Residues 2650–2795 (ATKAIEHGHV…IPFLEPTLPK (146 aa)) enclose the Helicase ATP-binding domain. An ATP-binding site is contributed by 2663–2670 (AKTASGKS). A DEFH box motif is present at residues 2750–2753 (DEFH).

The protein in the C-terminal section; belongs to the DEAD box helicase family. In terms of processing, papain-like protease p48 is autocatalytically processed. The putative RNA-directed RNA polymerase/helicase is probably further processed.

It is found in the host membrane. It catalyses the reaction RNA(n) + a ribonucleoside 5'-triphosphate = RNA(n+1) + diphosphate. It carries out the reaction ATP + H2O = ADP + phosphate + H(+). Papain-like protease p48 is a cysteine protease of the peptidase family C8. This is ORFB polyprotein from Cryphonectria parasitica (Chestnut blight fungus).